The following is a 292-amino-acid chain: Cytidine deaminase (292 aa).

CMP/dCMP-type deaminase domains are found at residues 47-167 (TPLK…FGPK) and 186-292 (DHQD…YYSL). 88 to 90 (NQE) serves as a coordination point for substrate. A Zn(2+)-binding site is contributed by histidine 101. Catalysis depends on glutamate 103, which acts as the Proton donor. The Zn(2+) site is built by cysteine 128 and cysteine 131.

Belongs to the cytidine and deoxycytidylate deaminase family. In terms of assembly, homodimer. Requires Zn(2+) as cofactor.

It catalyses the reaction cytidine + H2O + H(+) = uridine + NH4(+). It carries out the reaction 2'-deoxycytidine + H2O + H(+) = 2'-deoxyuridine + NH4(+). Functionally, this enzyme scavenges exogenous and endogenous cytidine and 2'-deoxycytidine for UMP synthesis. The protein is Cytidine deaminase of Haemophilus influenzae (strain PittEE).